Consider the following 134-residue polypeptide: IIYPGTLWCGHGNVSSSPDELGRFKHTDSCCRSHDMCPDVMSAGESKHGLTNTASHTRLSCDCDDKFYDCLKNSSDTISSYFVGEMYFNILDTKCYKLEHPVTGCGKRTEGRCLNYTVDKSKPKVYQWFDLRKY.

Residues Trp-8, Gly-10, and Gly-12 each contribute to the Ca(2+) site. 5 disulfide bridges follow: Cys-9/Cys-31, Cys-30/Cys-70, Cys-37/Cys-63, Cys-61/Cys-95, and Cys-105/Cys-113. N-linked (GlcNAc...) asparagine glycosylation is present at Asn-13. His-34 is an active-site residue. Residue Asp-35 coordinates Ca(2+). Asp-64 is a catalytic residue.

The protein belongs to the phospholipase A2 family. Group III subfamily. It depends on Ca(2+) as a cofactor. As to expression, expressed by the venom gland.

The protein localises to the secreted. It catalyses the reaction a 1,2-diacyl-sn-glycero-3-phosphocholine + H2O = a 1-acyl-sn-glycero-3-phosphocholine + a fatty acid + H(+). Its function is as follows. PLA2 catalyzes the calcium-dependent hydrolysis of the 2-acyl groups in 3-sn-phosphoglycerides. The protein is Phospholipase A2 of Apis dorsata (Giant honeybee).